Here is a 209-residue protein sequence, read N- to C-terminus: MKKAIIGKKVGMTQIFDENGRVIPVTVVEAGPCVVVQKKTVETDGYDAIQVGFGELREKLVNKPRRGHFAKAGVSLRRTLKEFRMEDVANYNVGDEIKVDTFEIGDKVDVSGVSKGKGFQGTIKRWNASRGPMSHGSKFHRAPGSMGAASDPSRTFKNKRMPGHMGAKNTTVLNLEVVKIMPEKNIILIKGGIPGPNKGTIVIRNSVKA.

Residues 127 to 153 form a disordered region; sequence NASRGPMSHGSKFHRAPGSMGAASDPS.

This sequence belongs to the universal ribosomal protein uL3 family. In terms of assembly, part of the 50S ribosomal subunit. Forms a cluster with proteins L14 and L19.

Its function is as follows. One of the primary rRNA binding proteins, it binds directly near the 3'-end of the 23S rRNA, where it nucleates assembly of the 50S subunit. This is Large ribosomal subunit protein uL3 from Clostridium perfringens (strain SM101 / Type A).